A 227-amino-acid polypeptide reads, in one-letter code: NAD(P)H-hydrate epimerase (227 aa).

The YjeF N-terminal domain maps to 12–221 (SRLVDELAIA…DIGVPRALLE (210 aa)). A (6S)-NADPHX-binding site is contributed by 59–63 (NNGGD). K(+) contacts are provided by asparagine 60 and aspartate 131. Residues 135–141 (GTGATGE) and aspartate 164 each bind (6S)-NADPHX. Threonine 167 contributes to the K(+) binding site.

This sequence belongs to the NnrE/AIBP family. It depends on K(+) as a cofactor.

It carries out the reaction (6R)-NADHX = (6S)-NADHX. The catalysed reaction is (6R)-NADPHX = (6S)-NADPHX. Its function is as follows. Catalyzes the epimerization of the S- and R-forms of NAD(P)HX, a damaged form of NAD(P)H that is a result of enzymatic or heat-dependent hydration. This is a prerequisite for the S-specific NAD(P)H-hydrate dehydratase to allow the repair of both epimers of NAD(P)HX. This Pirellula staleyi (strain ATCC 27377 / DSM 6068 / ICPB 4128) (Pirella staleyi) protein is NAD(P)H-hydrate epimerase.